Reading from the N-terminus, the 459-residue chain is MTRRIFGLETEYGITYAHPTDDVTLSADEVARQLFKKVVAWGRSSNVFLRNGSRLYLDVGSHPEYATAECDSVEQLIAHDRGGELILVDLIDDAQRRLAQEGYTGTIHLLKNNTDSAGNSYGCHENYLVRRQGDFTRLADILIPFLITRQVVVGAGKIMSTPQGPRYCFSQRADHMWEAVSSATTRSRPIINTRDEPHADAEFYRRLHVIVGDSNIAEPTTFLKVGATDMVLRLIEAGVPMRDLALDNAMRAIREISHDITGRATVTLSSGKTVTAWQLQEMYVEKVRTYVESLGPLSPTDEAVFELWERALRAVETQDHSLIDRDIDWAIKKRLLDRTQDRLGCALDDPRLARLDLAYHDISPATGLGHRLVSRSMMNRVVSDAEVERASQVAPETTRAHLRGRFVTAAQEQKKDYTVDWVHLKLNDQAQRTVLCKDPFAHVDDRVDQLIDSMRTQAT.

Glu-9 contacts Mg(2+). An ATP-binding site is contributed by Arg-54. Tyr-56 is a binding site for Mg(2+). Residue Asp-58 is the Proton acceptor of the active site. Position 64 (Glu-64) interacts with Mg(2+). Residues Thr-67 and Trp-421 each coordinate ATP.

This sequence belongs to the Pup ligase/Pup deamidase family. Pup-conjugating enzyme subfamily.

It catalyses the reaction ATP + [prokaryotic ubiquitin-like protein]-L-glutamate + [protein]-L-lysine = ADP + phosphate + N(6)-([prokaryotic ubiquitin-like protein]-gamma-L-glutamyl)-[protein]-L-lysine.. It participates in protein degradation; proteasomal Pup-dependent pathway. It functions in the pathway protein modification; protein pupylation. Its function is as follows. Catalyzes the covalent attachment of the prokaryotic ubiquitin-like protein modifier Pup to the proteasomal substrate proteins, thereby targeting them for proteasomal degradation. This tagging system is termed pupylation. The ligation reaction involves the side-chain carboxylate of the C-terminal glutamate of Pup and the side-chain amino group of a substrate lysine. The sequence is that of Pup--protein ligase from Jonesia denitrificans (strain ATCC 14870 / DSM 20603 / BCRC 15368 / CIP 55.134 / JCM 11481 / NBRC 15587 / NCTC 10816 / Prevot 55134) (Listeria denitrificans).